The sequence spans 601 residues: Glutathione-regulated potassium-efflux system protein KefB (601 aa).

Transmembrane regions (helical) follow at residues 4-24, 29-49, 55-75, 87-107, 111-131, 152-172, 177-197, 207-227, 230-250, 262-282, 284-304, 324-344, and 356-376; these read ADLL…VPLA, IGAV…GLGF, EILH…GLEL, IFGV…GLLM, FLWQ…TAMA, VLLF…LLAG, HFDW…LIGG, FIAA…LVLS, LFMD…GVLL, AIDP…GMSL, LGVL…LVVI, MQFA…FSTA, and ALLL…MKGI. The region spanning 400-519 is the RCK N-terminal domain; that stretch reads KPQVVVVGFG…AGVTQFSRET (120 aa).

This sequence belongs to the monovalent cation:proton antiporter 2 (CPA2) transporter (TC 2.A.37) family. KefB subfamily. Interacts with the regulatory subunit KefG.

It is found in the cell inner membrane. Functionally, pore-forming subunit of a potassium efflux system that confers protection against electrophiles. Catalyzes K(+)/H(+) antiport. The protein is Glutathione-regulated potassium-efflux system protein KefB of Salmonella typhi.